The following is a 273-amino-acid chain: NADPH-dependent 7-cyano-7-deazaguanine reductase (273 aa).

Substrate is bound at residue 80–82 (VES). NADPH is bound at residue 82-83 (SK). The active-site Thioimide intermediate is C180. The active-site Proton donor is D187. A substrate-binding site is contributed by 219–220 (HE). 248–249 (RG) lines the NADPH pocket.

This sequence belongs to the GTP cyclohydrolase I family. QueF type 2 subfamily. As to quaternary structure, homodimer.

It localises to the cytoplasm. The enzyme catalyses 7-aminomethyl-7-carbaguanine + 2 NADP(+) = 7-cyano-7-deazaguanine + 2 NADPH + 3 H(+). It functions in the pathway tRNA modification; tRNA-queuosine biosynthesis. Its function is as follows. Catalyzes the NADPH-dependent reduction of 7-cyano-7-deazaguanine (preQ0) to 7-aminomethyl-7-deazaguanine (preQ1). This chain is NADPH-dependent 7-cyano-7-deazaguanine reductase, found in Bordetella bronchiseptica (strain ATCC BAA-588 / NCTC 13252 / RB50) (Alcaligenes bronchisepticus).